The sequence spans 130 residues: MGIVGVGIDLVSIPDFAEQVDQPGTAFAATFTPGERRDASDKSSSAARHLAARWAAKEAVIKAWSGSRFAQRPVLPEDIHRDIEVVTDMWGRPRVRLTGEIAKHLADVTIHVSLTHEGDTAAAVAILETS.

Mg(2+)-binding residues include D9 and E58.

This sequence belongs to the P-Pant transferase superfamily. AcpS family. The cofactor is Mg(2+).

It localises to the cytoplasm. The catalysed reaction is apo-[ACP] + CoA = holo-[ACP] + adenosine 3',5'-bisphosphate + H(+). In terms of biological role, transfers the 4'-phosphopantetheine moiety from coenzyme A to a Ser of acyl-carrier-protein. The chain is Holo-[acyl-carrier-protein] synthase from Mycobacterium marinum (strain ATCC BAA-535 / M).